The sequence spans 460 residues: Centrosomal protein CEP57L1 (460 aa).

Phosphoserine is present on S49. Coiled-coil stretches lie at residues 51–228 and 317–384; these read NSQA…EISK and ISIC…LKKH. The segment covering 399 to 410 has biased composition (polar residues); the sequence is KMSEASGIQQED. Residues 399–423 form a disordered region; that stretch reads KMSEASGIQQEDSYPKGSKNIKNSP.

The protein belongs to the translokin family.

The protein resides in the cytoplasm. It is found in the cytoskeleton. The protein localises to the microtubule organizing center. Its subcellular location is the centrosome. Centrosomal protein which may be required for microtubule attachment to centrosomes. This chain is Centrosomal protein CEP57L1 (CEP57L1), found in Homo sapiens (Human).